Here is a 342-residue protein sequence, read N- to C-terminus: Galactose mutarotase (342 aa).

N-acetylalanine is present on alanine 2. At serine 14 the chain carries Phosphoserine. Residues 81–82 (NR) and histidine 107 contribute to the beta-D-galactose site. Serine 124 is subject to Phosphoserine. The active-site Proton donor is the histidine 176. Beta-D-galactose contacts are provided by residues 176-178 (HSY), aspartate 243, glutamine 279, and glutamate 307. The active-site Proton acceptor is the glutamate 307.

This sequence belongs to the aldose epimerase family. Monomer.

The protein resides in the cytoplasm. The catalysed reaction is alpha-D-galactose = beta-D-galactose. It carries out the reaction alpha-D-glucose = beta-D-glucose. The protein operates within carbohydrate metabolism; hexose metabolism. It functions in the pathway carbohydrate metabolism; galactose metabolism. Functionally, mutarotase that catalyzes the interconversion of beta-D-galactose and alpha-D-galactose during galactose metabolism. Beta-D-galactose is metabolized in the liver into glucose 1-phosphate, the primary metabolic fuel, by the action of four enzymes that constitute the Leloir pathway: GALM, GALK1 (galactokinase), GALT (galactose-1-phosphate uridylyltransferase) and GALE (UDP-galactose-4'-epimerase). Involved in the maintenance of the equilibrium between the beta- and alpha-anomers of galactose, therefore ensuring a sufficient supply of the alpha-anomer for GALK1. Also active on D-glucose although shows a preference for galactose over glucose. The polypeptide is Galactose mutarotase (Homo sapiens (Human)).